We begin with the raw amino-acid sequence, 268 residues long: Ubiquinone biosynthesis protein COQ4 homolog, mitochondrial (268 aa).

Residues H171, D172, H175, and E187 each coordinate Zn(2+).

Belongs to the COQ4 family. Component of a multi-subunit COQ enzyme complex. It depends on Zn(2+) as a cofactor.

The protein resides in the mitochondrion inner membrane. It carries out the reaction a 4-hydroxy-3-methoxy-5-(all-trans-polyprenyl)benzoate + H(+) = a 2-methoxy-6-(all-trans-polyprenyl)phenol + CO2. Its pathway is cofactor biosynthesis; ubiquinone biosynthesis. Its function is as follows. Lyase that catalyzes the C1-decarboxylation of 4-hydroxy-3-methoxy-5-(all-trans-polyprenyl)benzoic acid into 2-methoxy-6-(all-trans-polyprenyl)phenol during ubiquinone biosynthesis. The sequence is that of Ubiquinone biosynthesis protein COQ4 homolog, mitochondrial from Drosophila yakuba (Fruit fly).